The sequence spans 191 residues: 3-isopropylmalate dehydratase small subunit (191 aa).

The protein belongs to the LeuD family. LeuD type 1 subfamily. Heterodimer of LeuC and LeuD.

It carries out the reaction (2R,3S)-3-isopropylmalate = (2S)-2-isopropylmalate. It functions in the pathway amino-acid biosynthesis; L-leucine biosynthesis; L-leucine from 3-methyl-2-oxobutanoate: step 2/4. Functionally, catalyzes the isomerization between 2-isopropylmalate and 3-isopropylmalate, via the formation of 2-isopropylmaleate. This chain is 3-isopropylmalate dehydratase small subunit, found in Anaeromyxobacter sp. (strain K).